The primary structure comprises 982 residues: Serine/threonine-protein kinase ATG1 (982 aa).

Positions 19–324 (FVIGAEIGKG…FENFFAHPVI (306 aa)) constitute a Protein kinase domain. ATP contacts are provided by residues 25–33 (IGKGSFAQV) and K48. D162 (proton acceptor) is an active-site residue. 4 disordered regions span residues 334-506 (DDIP…REKA), 813-834 (RLPDDHPSHPSNHPQGSESVNG), 898-918 (PKRRLSANMDDSGGDGEDGHA), and 947-982 (RMISNASKAQQQSQPQSLIRRRSGDVTPRSVPSYSS). 2 stretches are compositionally biased toward basic and acidic residues: residues 335–359 (DIPKPEASEQRSSSKDTRAASKSDD) and 372–387 (HPTDNDQIRDQFRRVE). Low complexity predominate over residues 388–398 (PPSSAAESAPS). Over residues 463 to 481 (SNASLNRSNRESSSPTSAA) the composition is skewed to polar residues.

It belongs to the protein kinase superfamily. Ser/Thr protein kinase family. APG1/unc-51/ULK1 subfamily. As to quaternary structure, homodimer. Forms a ternary complex with ATG13 and ATG17. Uniformly detected in conidia, mycelia and appressoria (at protein level).

Its subcellular location is the cytoplasm. It is found in the preautophagosomal structure membrane. It carries out the reaction L-seryl-[protein] + ATP = O-phospho-L-seryl-[protein] + ADP + H(+). It catalyses the reaction L-threonyl-[protein] + ATP = O-phospho-L-threonyl-[protein] + ADP + H(+). Its function is as follows. Serine/threonine protein kinase involved in the cytoplasm to vacuole transport (Cvt) and found to be essential in autophagy, where it is required for the formation of autophagosomes. Involved in the clearance of protein aggregates which cannot be efficiently cleared by the proteasome. Required for selective autophagic degradation of the nucleus (nucleophagy) as well as for mitophagy which contributes to regulate mitochondrial quantity and quality by eliminating the mitochondria to a basal level to fulfill cellular energy requirements and preventing excess ROS production. Also involved in endoplasmic reticulum-specific autophagic process, in selective removal of ER-associated degradation (ERAD) substrates. Plays a key role in ATG9 and ATG23 cycling through the pre-autophagosomal structure and is necessary to promote ATG18 binding to ATG9 through phosphorylation of ATG9. Catalyzes phosphorylation of ATG4, decreasing the interaction between ATG4 and ATG8 and impairing deconjugation of PE-conjugated forms of ATG8. Autophagy is essential to fungal development, production of appressorium turgor, and pathogenicity in rice blast disease. This Pyricularia oryzae (strain 70-15 / ATCC MYA-4617 / FGSC 8958) (Rice blast fungus) protein is Serine/threonine-protein kinase ATG1.